Consider the following 578-residue polypeptide: Sulfite reductase [NADPH] hemoprotein beta-component (578 aa).

C441, C447, C487, and C491 together coordinate [4Fe-4S] cluster. C491 serves as a coordination point for siroheme.

This sequence belongs to the nitrite and sulfite reductase 4Fe-4S domain family. As to quaternary structure, alpha(8)-beta(8). The alpha component is a flavoprotein, the beta component is a hemoprotein. Siroheme is required as a cofactor. The cofactor is [4Fe-4S] cluster.

It catalyses the reaction hydrogen sulfide + 3 NADP(+) + 3 H2O = sulfite + 3 NADPH + 4 H(+). Its pathway is sulfur metabolism; hydrogen sulfide biosynthesis; hydrogen sulfide from sulfite (NADPH route): step 1/1. Functionally, component of the sulfite reductase complex that catalyzes the 6-electron reduction of sulfite to sulfide. This is one of several activities required for the biosynthesis of L-cysteine from sulfate. In Vibrio parahaemolyticus serotype O3:K6 (strain RIMD 2210633), this protein is Sulfite reductase [NADPH] hemoprotein beta-component.